Here is a 436-residue protein sequence, read N- to C-terminus: Voltage-gated potassium channel regulatory subunit KCNG3 (436 aa).

Residues 1–168 lie on the Cytoplasmic side of the membrane; the sequence is MTFGRSGAAS…RTFEEPTSSL (168 aa). A helical membrane pass occupies residues 169 to 190; the sequence is AAQILASVSVVFVIVSMVVLCA. Topologically, residues 191–220 are extracellular; it reads STLPDWRNAAADNRSLDDRSRYSAGPGREP. A helical transmembrane segment spans residues 221-242; sequence SGIIEAICIGWFTAECIVRFIV. Topologically, residues 243-253 are cytoplasmic; that stretch reads SKNKCEFVKRP. Residues 254 to 274 form a helical membrane-spanning segment; sequence LNIIDLLAITPYYISVLMTVF. The Extracellular segment spans residues 275 to 284; that stretch reads TGENSQLQRA. The chain crosses the membrane as a helical; Voltage-sensor span at residues 285 to 305; sequence GVTLRVLRMMRIFWVIKLARH. Over 306 to 320 the chain is Cytoplasmic; the sequence is FIGLQTLGLTLKRCY. The chain crosses the membrane as a helical span at residues 321 to 342; that stretch reads REMVMLLVFICVAMAIFSALSQ. At 343 to 360 the chain is on the extracellular side; sequence LLEHGLDLETSNKDFTSI. The helical intramembrane region spans 361-372; it reads PAACWWVIISMT. The short motif at 373–378 is the Selectivity filter element; sequence TVGYGD. The stretch at 373-380 is an intramembrane region; the sequence is TVGYGDMY. Over 381-387 the chain is Extracellular; that stretch reads PITVPGR. The chain crosses the membrane as a helical span at residues 388–416; sequence ILGGVCVVSGIVLLALPITFIYHSFVQCY. Residues 417–436 are Cytoplasmic-facing; that stretch reads HELKFRSARYSRSLSTEFLN.

Belongs to the potassium channel family. G (TC 1.A.1.2) subfamily. Kv6.3/KCNG3 sub-subfamily. As to quaternary structure, heterotetramer with KCNB1. Does not form homomultimers. In terms of tissue distribution, expressed in the brain, liver, testis, small intestine, colon, thymus and adrenal gland.

The protein resides in the cell membrane. It is found in the cytoplasm. In terms of biological role, regulatory subunit of the voltage-gated potassium (Kv) channel which, when coassembled with KCNB1, modulates the kinetics parameters of the heterotetrameric channel namely the inactivation and deactivation rate. Potassium channel subunit that does not form functional channels by itself. Reduces the deactivation rate. Moderately accelerates activation. The protein is Voltage-gated potassium channel regulatory subunit KCNG3 of Homo sapiens (Human).